A 189-amino-acid polypeptide reads, in one-letter code: Peptidyl-tRNA hydrolase (189 aa).

A tRNA-binding site is contributed by Y15. The active-site Proton acceptor is H20. F66, N68, and N114 together coordinate tRNA.

The protein belongs to the PTH family. In terms of assembly, monomer.

The protein resides in the cytoplasm. The enzyme catalyses an N-acyl-L-alpha-aminoacyl-tRNA + H2O = an N-acyl-L-amino acid + a tRNA + H(+). In terms of biological role, hydrolyzes ribosome-free peptidyl-tRNAs (with 1 or more amino acids incorporated), which drop off the ribosome during protein synthesis, or as a result of ribosome stalling. Its function is as follows. Catalyzes the release of premature peptidyl moieties from peptidyl-tRNA molecules trapped in stalled 50S ribosomal subunits, and thus maintains levels of free tRNAs and 50S ribosomes. The sequence is that of Peptidyl-tRNA hydrolase from Dichelobacter nodosus (strain VCS1703A).